The sequence spans 660 residues: WD repeat-containing protein 48 homolog (660 aa).

8 WD repeats span residues 23 to 78 (MHRS…RDLH), 84 to 120 (HHTD…CMST), 123 to 162 (THRD…KLTA), 174 to 213 (GNKD…KLMK), 216 to 255 (GHTD…CISS), 258 to 297 (CHSE…TAQL), 300 to 341 (IEDA…ISVE), and 362 to 401 (PGAA…KVCD).

It belongs to the WD repeat WDR48 family.

Its function is as follows. Regulator of deubiquitinating complexes. Activates deubiquitination by increasing the catalytic turnover without increasing the affinity of deubiquitinating enzymes for the substrate. This is WD repeat-containing protein 48 homolog from Brugia malayi (Filarial nematode worm).